Here is a 113-residue protein sequence, read N- to C-terminus: Putative pterin-4-alpha-carbinolamine dehydratase (113 aa).

Belongs to the pterin-4-alpha-carbinolamine dehydratase family.

The catalysed reaction is (4aS,6R)-4a-hydroxy-L-erythro-5,6,7,8-tetrahydrobiopterin = (6R)-L-erythro-6,7-dihydrobiopterin + H2O. This Idiomarina loihiensis (strain ATCC BAA-735 / DSM 15497 / L2-TR) protein is Putative pterin-4-alpha-carbinolamine dehydratase.